The following is a 508-amino-acid chain: Proto-oncogene tyrosine-protein kinase LCK (508 aa).

The N-myristoyl glycine moiety is linked to residue Gly-2. S-palmitoyl cysteine attachment occurs at residues Cys-3 and Cys-5. Residues 60 to 120 (LQDKLVVALY…PHNFVAMVNS (61 aa)) form the SH3 domain. An SH2 domain is found at 126 to 223 (WFFKNLSRKN…GLCTRLGKPC (98 aa)). Positions 244 to 497 (LKLVEKLGAG…YMKSVLEDFF (254 aa)) constitute a Protein kinase domain. ATP-binding positions include 250–258 (LGAGQFGEV) and Lys-272. Asp-363 (proton acceptor) is an active-site residue. Tyr-393 bears the Phosphotyrosine; by autocatalysis mark. Tyr-504 carries the phosphotyrosine modification.

It belongs to the protein kinase superfamily. Tyr protein kinase family. SRC subfamily. Binds to the cytoplasmic domain of cell surface receptors, such as CD4, CD8. In terms of processing, phosphorylated on Tyr-393, which increases enzymatic activity, this site is dephosphorylated by PTN22. Phosphorylated on Tyr-504, presumably by CSK, which decreases activity. Dephosphorylated by PTPRC/CD45. Dephosphorylation at Tyr-393 by PTPN2 negatively regulates T-cells differentiation. Palmitoylation regulates association with the plasma membrane.

The protein localises to the cell membrane. It localises to the cytoplasm. The protein resides in the cytosol. The enzyme catalyses L-tyrosyl-[protein] + ATP = O-phospho-L-tyrosyl-[protein] + ADP + H(+). With respect to regulation, inhibited by tyrosine phosphorylation. Functionally, tyrosine kinase that plays an essential role for the selection and maturation of developing T-cell in the thymus and in mature T-cell function. Is constitutively associated with the cytoplasmic portions of the CD4 and CD8 surface receptors and plays a key role in T-cell antigen receptor(TCR)-linked signal transduction pathways. This is Proto-oncogene tyrosine-protein kinase LCK (LCK) from Gallus gallus (Chicken).